The sequence spans 289 residues: LysM and putative peptidoglycan-binding domain-containing protein 4 (289 aa).

Residues 1 to 23 form a disordered region; the sequence is MRLREGPTHSFQPPSSVHSSLGS. The Extracellular segment spans residues 1–208; the sequence is MRLREGPTHS…PASGADWGIR (208 aa). Positions 9 to 23 are enriched in polar residues; that stretch reads HSFQPPSSVHSSLGS. N-linked (GlcNAc...) asparagine glycosylation is found at N30 and N59. In terms of domain architecture, LysM spans 71–115; sequence LERAITEDDNLNKLALQYGCKVSDIKRVNNLITDQDIYALKTIKI. 2 N-linked (GlcNAc...) asparagine glycosylation sites follow: N134 and N178. The chain crosses the membrane as a helical span at residues 209-229; it reads WWNAVFIMLLVGIVLPVFYIV. Residues 230 to 289 are Cytoplasmic-facing; the sequence is YFKTQGDSEGTFSIEGRTNVSTSLSPHTNTGHSMEQMTQRTSGFSPGLLQDTHKLLNPGG. The tract at residues 252–272 is disordered; sequence SLSPHTNTGHSMEQMTQRTSG.

The protein localises to the membrane. In Xenopus laevis (African clawed frog), this protein is LysM and putative peptidoglycan-binding domain-containing protein 4 (lysmd4).